A 252-amino-acid polypeptide reads, in one-letter code: UPF0736 protein OB1207 (252 aa).

Belongs to the UPF0736 family.

The sequence is that of UPF0736 protein OB1207 from Oceanobacillus iheyensis (strain DSM 14371 / CIP 107618 / JCM 11309 / KCTC 3954 / HTE831).